A 514-amino-acid polypeptide reads, in one-letter code: F-box-like/WD repeat-containing protein TBL1XR1 (514 aa).

Ser2 is subject to N-acetylserine. One can recognise a LisH domain in the interval 4 to 36 (SSDEVNFLVYRYLQESGFSHSAFTFGIESHISQ). The 46-residue stretch at 41-86 (GALVPPAALISIIQKGLQYVEAEVSINEDGTLFDGRPIESLSLIDA) folds into the F-box-like domain. At Lys102 the chain carries N6-acetyllysine. The disordered stretch occupies residues 114 to 139 (AAAATNQQGSAKNGENTANGEENGAH). The segment covering 124-135 (AKNGENTANGEE) has biased composition (low complexity). WD repeat units lie at residues 167-206 (GHESEVFICAWNPVSDLLASGSGDSTARIWNLSENSTSGP), 223-262 (PSNKDVTSLDWNSEGTLLATGSYDGFARIWTKDGNLASTL), 264-303 (QHKGPIFALKWNKKGNFILSAGVDKTTIIWDAHTGEAKQQ), 306-344 (FHSAPALDVDWQSNNTFASCSTDMCIHVCKLGQDRPIKT), 347-386 (GHTNEVNAIKWDPTGNLLASCSDDMTLKIWSMKQDNCVHD), 389-437 (AHNK…CIHT), 440-479 (KHQEPVYSVAFSPDGRYLASGSFDKCVHIWNTQTGALVHS), and 481-513 (RGTGGIFEVCWNAAGDKVGASASDGSVCVLDLR). A Glycyl lysine isopeptide (Lys-Gly) (interchain with G-Cter in SUMO2) cross-link involves residue Lys277.

It belongs to the WD repeat EBI family. Component of the N-Cor repressor complex, at least composed of NCOR1, NCOR2, HDAC3, TBL1X, TBL1XR1, CORO2A and GPS2. Probable component of some E3 ubiquitin ligase complex. Interacts with histones H2B and H4. Interacts with MECP2; bridges interaction between MECP2 and NCOR1. Interacts with USP44.

The protein resides in the nucleus. F-box-like protein involved in the recruitment of the ubiquitin/19S proteasome complex to nuclear receptor-regulated transcription units. Plays an essential role in transcription activation mediated by nuclear receptors. Probably acts as integral component of the N-Cor corepressor complex that mediates the recruitment of the 19S proteasome complex, leading to the subsequent proteasomal degradation of N-Cor complex, thereby allowing cofactor exchange, and transcription activation. The polypeptide is F-box-like/WD repeat-containing protein TBL1XR1 (Tbl1xr1) (Mus musculus (Mouse)).